Reading from the N-terminus, the 382-residue chain is Chaperone protein DnaJ (382 aa).

Residues 5–70 enclose the J domain; that stretch reads DYYELLGVQK…EKRAAYDRYG (66 aa). The CR-type zinc finger occupies 146–224; the sequence is GAEKEISFRK…CHGEGRVRRT (79 aa). Residues Cys159, Cys162, Cys176, Cys179, Cys198, Cys201, Cys212, and Cys215 each coordinate Zn(2+). CXXCXGXG motif repeat units follow at residues 159 to 166, 176 to 183, 198 to 205, and 212 to 219; these read CERCDGSG, CPTCRGAG, CPTCGGMG, and CTVCHGEG. The interval 230 to 250 is disordered; sequence RIPPGVDNGSRLRSSGNGEAG.

The protein belongs to the DnaJ family. In terms of assembly, homodimer. Requires Zn(2+) as cofactor.

The protein resides in the cytoplasm. Its function is as follows. Participates actively in the response to hyperosmotic and heat shock by preventing the aggregation of stress-denatured proteins and by disaggregating proteins, also in an autonomous, DnaK-independent fashion. Unfolded proteins bind initially to DnaJ; upon interaction with the DnaJ-bound protein, DnaK hydrolyzes its bound ATP, resulting in the formation of a stable complex. GrpE releases ADP from DnaK; ATP binding to DnaK triggers the release of the substrate protein, thus completing the reaction cycle. Several rounds of ATP-dependent interactions between DnaJ, DnaK and GrpE are required for fully efficient folding. Also involved, together with DnaK and GrpE, in the DNA replication of plasmids through activation of initiation proteins. This chain is Chaperone protein DnaJ, found in Opitutus terrae (strain DSM 11246 / JCM 15787 / PB90-1).